A 295-amino-acid chain; its full sequence is 33 kDa chaperonin (295 aa).

Cystine bridges form between Cys230/Cys232 and Cys264/Cys267.

This sequence belongs to the HSP33 family. Post-translationally, under oxidizing conditions two disulfide bonds are formed involving the reactive cysteines. Under reducing conditions zinc is bound to the reactive cysteines and the protein is inactive.

The protein localises to the cytoplasm. In terms of biological role, redox regulated molecular chaperone. Protects both thermally unfolding and oxidatively damaged proteins from irreversible aggregation. Plays an important role in the bacterial defense system toward oxidative stress. The chain is 33 kDa chaperonin from Ectopseudomonas mendocina (strain ymp) (Pseudomonas mendocina).